The primary structure comprises 179 residues: Small ribosomal subunit protein uS5 (179 aa).

Residues 22–85 (MIEKLVAVNR…EYARKRMSNV (64 aa)) enclose the S5 DRBM domain.

Belongs to the universal ribosomal protein uS5 family. Part of the 30S ribosomal subunit. Contacts proteins S4 and S8.

Its function is as follows. With S4 and S12 plays an important role in translational accuracy. Functionally, located at the back of the 30S subunit body where it stabilizes the conformation of the head with respect to the body. The chain is Small ribosomal subunit protein uS5 from Xylella fastidiosa (strain M23).